The sequence spans 262 residues: GTP cyclohydrolase 1 type 2 homolog (262 aa).

A divalent metal cation-binding residues include His65, Asp102, His222, and Glu225.

It belongs to the GTP cyclohydrolase I type 2/NIF3 family. As to quaternary structure, homohexamer.

This Streptococcus pyogenes serotype M6 (strain ATCC BAA-946 / MGAS10394) protein is GTP cyclohydrolase 1 type 2 homolog.